Consider the following 283-residue polypeptide: Cyclin-C (283 aa).

A Cyclin N-terminal domain is found at 46 to 144; that stretch reads NVIQALGEHL…ILECEFYLLE (99 aa). Residues 252–283 form a disordered region; the sequence is TILSKMPKPKPPPNSEGEQGPNGSQNSSYSQS. Over residues 272-283 the composition is skewed to polar residues; the sequence is PNGSQNSSYSQS. Phosphoserine is present on Ser275.

Belongs to the cyclin family. Cyclin C subfamily. Component of the Mediator complex, which is composed of MED1, MED4, MED6, MED7, MED8, MED9, MED10, MED11, MED12, MED13, MED13L, MED14, MED15, MED16, MED17, MED18, MED19, MED20, MED21, MED22, MED23, MED24, MED25, MED26, MED27, MED29, MED30, MED31, CCNC, CDK8 and CDC2L6/CDK11. The MED12, MED13, CCNC and CDK8 subunits form a distinct module termed the CDK8 module. Mediator containing the CDK8 module is less active than Mediator lacking this module in supporting transcriptional activation. Individual preparations of the Mediator complex lacking one or more distinct subunits have been variously termed ARC, CRSP, DRIP, PC2, SMCC and TRAP. The cylin/CDK pair formed by CCNC/CDK8 also associates with the large subunit of RNA polymerase II. Highest levels in pancreas. High levels in heart, liver, skeletal muscle and kidney. Low levels in brain.

The protein resides in the nucleus. Component of the Mediator complex, a coactivator involved in regulated gene transcription of nearly all RNA polymerase II-dependent genes. Mediator functions as a bridge to convey information from gene-specific regulatory proteins to the basal RNA polymerase II transcription machinery. Mediator is recruited to promoters by direct interactions with regulatory proteins and serves as a scaffold for the assembly of a functional preinitiation complex with RNA polymerase II and the general transcription factors. Binds to and activates cyclin-dependent kinase CDK8 that phosphorylates the CTD (C-terminal domain) of the large subunit of RNA polymerase II (RNAp II), which may inhibit the formation of a transcription initiation complex. This chain is Cyclin-C (CCNC), found in Homo sapiens (Human).